The primary structure comprises 181 residues: Large ribosomal subunit protein uL5 (181 aa).

This sequence belongs to the universal ribosomal protein uL5 family. As to quaternary structure, part of the 50S ribosomal subunit; part of the 5S rRNA/L5/L18/L25 subcomplex. Contacts the 5S rRNA and the P site tRNA. Forms a bridge to the 30S subunit in the 70S ribosome.

Functionally, this is one of the proteins that bind and probably mediate the attachment of the 5S RNA into the large ribosomal subunit, where it forms part of the central protuberance. In the 70S ribosome it contacts protein S13 of the 30S subunit (bridge B1b), connecting the 2 subunits; this bridge is implicated in subunit movement. Contacts the P site tRNA; the 5S rRNA and some of its associated proteins might help stabilize positioning of ribosome-bound tRNAs. In Aster yellows witches'-broom phytoplasma (strain AYWB), this protein is Large ribosomal subunit protein uL5.